Reading from the N-terminus, the 1097-residue chain is Cyclin-T (1097 aa).

3 disordered regions span residues 319–782, 804–936, and 985–1097; these read SNIT…SNGI, LLKP…SLQA, and AAPV…YNKK. A compositionally biased stretch (basic and acidic residues) spans 332–350; it reads DSRDRDRDRERERERERDP. 4 stretches are compositionally biased toward low complexity: residues 373 to 390, 420 to 456, 467 to 478, and 489 to 511; these read SSSV…SSSS, PSSH…GRPS, GMPPVGVGMPPH, and PQQP…SGMS. Polar residues predominate over residues 580-591; that stretch reads LPYSQSQSYGHM. Over residues 592–606 the composition is skewed to low complexity; that stretch reads QQQPVPQSQQQQMPP. Over residues 609-620 the composition is skewed to polar residues; sequence SQHSLQSKNSLF. Basic and acidic residues predominate over residues 652 to 675; sequence HDYKLNSHPRDKESPKKERLTPTK. A compositionally biased stretch (low complexity) spans 687–698; it reads GSGNSSSGSGSS. The span at 860–870 shows a compositional bias: basic and acidic residues; sequence GEIKEESSSKS. Over residues 871-883 the composition is skewed to basic residues; that stretch reads EKKKKKDKHKHKE. Basic and acidic residues predominate over residues 884 to 895; it reads KDKSKDKTEKEE. Ser916 bears the Phosphoserine mark. Over residues 993-1007 the composition is skewed to gly residues; that stretch reads GAGGGGYSSSGGSSS. Basic and acidic residues predominate over residues 1016 to 1031; the sequence is SDRDRDKESKKNKSQD. The span at 1037–1050 shows a compositional bias: gly residues; the sequence is GAGGGIFNPLGGAG. Positions 1087-1097 are enriched in pro residues; it reads APPPMPVYNKK.

The protein belongs to the cyclin family. Cyclin C subfamily. Component of the super elongation complex (SEC), at least composed of Ell, Cdk9, cyclin-T (CycT), lilli and ear. Associates with CDK9 to form P-TEFb.

The protein resides in the nucleus. Functionally, regulatory subunit of the cyclin-dependent kinase pair (CDK9/cyclin T) complex, also called positive transcription elongation factor B (P-TEFb), which is proposed to facilitate the transition from abortive to production elongation by phosphorylating the CTD (carboxy-terminal domain) of the large subunit of RNA polymerase II (RNAP II). The sequence is that of Cyclin-T (CycT) from Drosophila melanogaster (Fruit fly).